Consider the following 202-residue polypeptide: Protease (202 aa).

Active-site residues include His55, Asp72, and Cys122.

It belongs to the peptidase C5 family. As to quaternary structure, interacts with protease cofactor pVI-C; this interaction is necessary for protease activation.

Its subcellular location is the virion. The protein localises to the host nucleus. The enzyme catalyses Cleaves proteins of the adenovirus and its host cell at two consensus sites: -Yaa-Xaa-Gly-Gly-|-Xaa- and -Yaa-Xaa-Gly-Xaa-|-Gly- (in which Yaa is Met, Ile or Leu, and Xaa is any amino acid).. Its activity is regulated as follows. Requires DNA and protease cofactor for maximal activation. Inside nascent virions, becomes partially activated by binding to the viral DNA, allowing it to cleave the cofactor that binds to the protease and fully activates it. Actin, like the viral protease cofactor, seems to act as a cofactor in the cleavage of cytokeratin 18 and of actin itself. In terms of biological role, cleaves viral precursor proteins (pTP, pIIIa, pVI, pVII, pVIII, and pX) inside newly assembled particles giving rise to mature virions. Protease complexed to its cofactor slides along the viral DNA to specifically locate and cleave the viral precursors. Mature virions have a weakened organization compared to the unmature virions, thereby facilitating subsequent uncoating. Without maturation, the particle lacks infectivity and is unable to uncoat. Late in adenovirus infection, in the cytoplasm, may participate in the cytoskeleton destruction. Cleaves host cell cytoskeletal keratins K7 and K18. This Bovine adenovirus 7 (BAdV-7) protein is Protease.